The primary structure comprises 169 residues: Disulfide bond formation protein B 1 (169 aa).

The Cytoplasmic segment spans residues 1 to 14 (MSDNTLYLRREKRF). A helical membrane pass occupies residues 15 to 31 (LVLLGIICLALIGGALY). Residues 32 to 49 (MQIVLGEAPCPLCILQRY) are Periplasmic-facing. Cysteine 41 and cysteine 44 are joined by a disulfide. A helical membrane pass occupies residues 50-64 (ALLFIAIFAFIGAAM). Residues 65-71 (SGRRGVT) lie on the Cytoplasmic side of the membrane. A helical membrane pass occupies residues 72–89 (VCETLVTLSALGGIAAAG). At 90 to 144 (RHVWILAHPSDSCGIDVLQPIVDGLPLATLFPTGFQVSGFCTTPYPPVLGLSLAQ) the chain is on the periplasmic side. Residues cysteine 102 and cysteine 130 are joined by a disulfide bond. Residues 145–163 (WALAAFVLTAVLVPACIIR) traverse the membrane as a helical segment. The Cytoplasmic segment spans residues 164–169 (NRRKPY).

It belongs to the DsbB family.

The protein resides in the cell inner membrane. Its function is as follows. Required for disulfide bond formation in some periplasmic proteins. Acts by oxidizing the DsbA protein. This is Disulfide bond formation protein B 1 from Pseudomonas savastanoi pv. phaseolicola (strain 1448A / Race 6) (Pseudomonas syringae pv. phaseolicola (strain 1448A / Race 6)).